A 301-amino-acid polypeptide reads, in one-letter code: Ribosomal protein L11 methyltransferase (301 aa).

S-adenosyl-L-methionine is bound by residues Thr-146, Gly-167, Asp-189, and Asn-234.

This sequence belongs to the methyltransferase superfamily. PrmA family.

It localises to the cytoplasm. It carries out the reaction L-lysyl-[protein] + 3 S-adenosyl-L-methionine = N(6),N(6),N(6)-trimethyl-L-lysyl-[protein] + 3 S-adenosyl-L-homocysteine + 3 H(+). Its function is as follows. Methylates ribosomal protein L11. This is Ribosomal protein L11 methyltransferase from Acinetobacter baumannii (strain SDF).